A 1104-amino-acid polypeptide reads, in one-letter code: MPRRTDLKSVLVIGSGPIVIGQAAEFDYSGTQACRVLRAEGLRVILVNSNPATIMTDPEMADATYVEPITPAVVEAIIAKERPDAVLATLGGQTALNTAIALYENGVLEKYGTELIGADVEAIKLGEDRQLFKGVVERCGAESARSHLCHSMEEVLAGAADLGYPVVVRPSFTMGGLGSGFAYDEADLRRIAGQGLHHSPVTEVLLEESILGWKEYELELMRDRADNVVVVCSIENFDPMGVHTGDSITVAPAMTLTDREYQRMRDIGIAVIREVGVDTGGCNIQFAVNPEDGRIIVIEMNPRVSRSSALASKATGFPIAKIAARLAVGYTLDEIPNDITSSTPASFEPTLDYVVVKVPRFAFEKFPAADPTLTTTMKSVGEAMALGRNFTEALQKALRSTEKRGATFSWAGEPGDRADLLRRAAQPTDERIGLVMQAIRAGATPEELFESTRIDPWFLDQMFLLDEIAGEVRDSDELTPELLRHAKRHGFSDAQIGELRHLPEDVVRGVRHALGIRPVYKTVDTCAAEFAASTPYHYSSYDEEDETRPREKAAIVILGSGPNRIGQGVEFDYSCVHASFALRDAGYETVMVNCNPETVSTDYDTSDRLYFEPLTLEDVLEVVHAEMRCGPVAGVIVQLGGQTPLGLAAKLEQAGVPIIGTSPQAIDLAEERGAFGQVLERAGLVAPKHGTASSFPGAKAIAAGIGYPVLVRPSYVLGGRGMQIVYDEASLEEYMRTATEVSPERPVLVDRFLDDAIEIDVDALFDGEEMYLGGIMEHIEEAGIHSGDSACVIPPPTLGNAELARVRAATEAIARGVGVRGLLNVQFALAADVLYVLEANPRASRTVPFVSKATGVALAKAAARLMAGTSIRDLRAEGLLPGRGDGGLLPADSPVSVKEAVLPFARFRTAEGVVVDSLLGPEMRSTGEVMGIDVDFPTAFGKSQTAAYGGLPTAGTAFISVADRDKRAMIFPIKRLADLGFTLVATEGTAQVLRRNGITSTVVRKHSEGTSEDGELTIVGRIGAGEIAMVVNTPSGNQARADGYEIRAAATAVGSPIITTIQELSAAVQAIEAAIVQERNGGGVNVASLQEHTARLNAAWEGRA.

The carboxyphosphate synthetic domain stretch occupies residues 1–402 (MPRRTDLKSV…ALQKALRSTE (402 aa)). Positions 129, 169, 175, 176, 208, 210, 215, 241, 242, 243, 285, and 299 each coordinate ATP. The ATP-grasp 1 domain maps to 133-328 (KGVVERCGAE…IAKIAARLAV (196 aa)). The Mg(2+) site is built by Gln-285, Glu-299, and Asn-301. Mn(2+) is bound by residues Gln-285, Glu-299, and Asn-301. The oligomerization domain stretch occupies residues 403 to 547 (KRGATFSWAG…YSSYDEEDET (145 aa)). The carbamoyl phosphate synthetic domain stretch occupies residues 548 to 948 (RPREKAAIVI…AFGKSQTAAY (401 aa)). The 192-residue stretch at 676 to 867 (GQVLERAGLV…LAKAAARLMA (192 aa)) folds into the ATP-grasp 2 domain. Arg-712, Arg-751, Leu-753, Glu-758, Gly-783, Ile-784, His-785, Ser-786, Gln-826, and Glu-838 together coordinate ATP. Mg(2+) is bound by residues Gln-826, Glu-838, and Asn-840. Gln-826, Glu-838, and Asn-840 together coordinate Mn(2+). In terms of domain architecture, MGS-like spans 949–1099 (GGLPTAGTAF…QEHTARLNAA (151 aa)). Positions 949 to 1104 (GGLPTAGTAF…RLNAAWEGRA (156 aa)) are allosteric domain.

It belongs to the CarB family. Composed of two chains; the small (or glutamine) chain promotes the hydrolysis of glutamine to ammonia, which is used by the large (or ammonia) chain to synthesize carbamoyl phosphate. Tetramer of heterodimers (alpha,beta)4. Requires Mg(2+) as cofactor. The cofactor is Mn(2+).

It catalyses the reaction hydrogencarbonate + L-glutamine + 2 ATP + H2O = carbamoyl phosphate + L-glutamate + 2 ADP + phosphate + 2 H(+). It carries out the reaction hydrogencarbonate + NH4(+) + 2 ATP = carbamoyl phosphate + 2 ADP + phosphate + 2 H(+). The protein operates within amino-acid biosynthesis; L-arginine biosynthesis; carbamoyl phosphate from bicarbonate: step 1/1. It functions in the pathway pyrimidine metabolism; UMP biosynthesis via de novo pathway; (S)-dihydroorotate from bicarbonate: step 1/3. Functionally, large subunit of the glutamine-dependent carbamoyl phosphate synthetase (CPSase). CPSase catalyzes the formation of carbamoyl phosphate from the ammonia moiety of glutamine, carbonate, and phosphate donated by ATP, constituting the first step of 2 biosynthetic pathways, one leading to arginine and/or urea and the other to pyrimidine nucleotides. The large subunit (synthetase) binds the substrates ammonia (free or transferred from glutamine from the small subunit), hydrogencarbonate and ATP and carries out an ATP-coupled ligase reaction, activating hydrogencarbonate by forming carboxy phosphate which reacts with ammonia to form carbamoyl phosphate. The protein is Carbamoyl phosphate synthase large chain of Kineococcus radiotolerans (strain ATCC BAA-149 / DSM 14245 / SRS30216).